A 351-amino-acid chain; its full sequence is Biotin synthase (351 aa).

A Radical SAM core domain is found at 58–285; that stretch reads NTVQLSTLLS…RAMVRLSAGR (228 aa). [4Fe-4S] cluster is bound by residues C73, C77, and C80. [2Fe-2S] cluster-binding residues include C117, C148, C208, and R280.

The protein belongs to the radical SAM superfamily. Biotin synthase family. Homodimer. [4Fe-4S] cluster serves as cofactor. Requires [2Fe-2S] cluster as cofactor.

The catalysed reaction is (4R,5S)-dethiobiotin + (sulfur carrier)-SH + 2 reduced [2Fe-2S]-[ferredoxin] + 2 S-adenosyl-L-methionine = (sulfur carrier)-H + biotin + 2 5'-deoxyadenosine + 2 L-methionine + 2 oxidized [2Fe-2S]-[ferredoxin]. Its pathway is cofactor biosynthesis; biotin biosynthesis; biotin from 7,8-diaminononanoate: step 2/2. In terms of biological role, catalyzes the conversion of dethiobiotin (DTB) to biotin by the insertion of a sulfur atom into dethiobiotin via a radical-based mechanism. This Paraburkholderia phymatum (strain DSM 17167 / CIP 108236 / LMG 21445 / STM815) (Burkholderia phymatum) protein is Biotin synthase.